The following is an 80-amino-acid chain: MTDLIHDATLDATGLNCPEPVMMLHKHVRELAAGGVLKVIATDPSTRRDIPKFCVFLGHELLGQQEEAGTYLYWIRKKAD.

C17 serves as the catalytic Cysteine persulfide intermediate.

It belongs to the sulfur carrier protein TusA family.

The protein localises to the cytoplasm. Its function is as follows. Sulfur carrier protein which probably makes part of a sulfur-relay system. The chain is Sulfur carrier protein TusA from Pseudomonas entomophila (strain L48).